A 311-amino-acid chain; its full sequence is Transcriptional regulatory protein MoaR1 (311 aa).

A DNA-binding region (ompR/PhoB-type) is located at residues 15-117 (LNATTAGAVQ…SEPPGYRLLI (103 aa)).

Belongs to the AfsR/DnrI/RedD regulatory family.

In terms of biological role, acts as a positive transcriptional regulator of the molybdopterin biosynthesis moa1 locus, promoting the expression of the moaA1B1C1D1 genes. Binds directly to the moaA1 promoter. The sequence is that of Transcriptional regulatory protein MoaR1 (moaR1) from Mycobacterium tuberculosis (strain ATCC 25618 / H37Rv).